The following is a 197-amino-acid chain: Nucleoid occlusion factor SlmA (197 aa).

The HTH tetR-type domain occupies I7 to L67. A DNA-binding region (H-T-H motif) is located at residues T30–F49.

The protein belongs to the nucleoid occlusion factor SlmA family. In terms of assembly, homodimer. Interacts with FtsZ.

Its subcellular location is the cytoplasm. The protein localises to the nucleoid. Its function is as follows. Required for nucleoid occlusion (NO) phenomenon, which prevents Z-ring formation and cell division over the nucleoid. Acts as a DNA-associated cell division inhibitor that binds simultaneously chromosomal DNA and FtsZ, and disrupts the assembly of FtsZ polymers. SlmA-DNA-binding sequences (SBS) are dispersed on non-Ter regions of the chromosome, preventing FtsZ polymerization at these regions. The chain is Nucleoid occlusion factor SlmA from Shewanella loihica (strain ATCC BAA-1088 / PV-4).